A 161-amino-acid polypeptide reads, in one-letter code: NADH-quinone oxidoreductase subunit I (161 aa).

2 consecutive 4Fe-4S ferredoxin-type domains span residues 53–82 (RRYP…IEAE) and 92–121 (TRYD…EGPN). Positions 62, 65, 68, 72, 101, 104, 107, and 111 each coordinate [4Fe-4S] cluster.

It belongs to the complex I 23 kDa subunit family. NDH-1 is composed of 14 different subunits. Subunits NuoA, H, J, K, L, M, N constitute the membrane sector of the complex. The cofactor is [4Fe-4S] cluster.

The protein resides in the cell inner membrane. It carries out the reaction a quinone + NADH + 5 H(+)(in) = a quinol + NAD(+) + 4 H(+)(out). NDH-1 shuttles electrons from NADH, via FMN and iron-sulfur (Fe-S) centers, to quinones in the respiratory chain. The immediate electron acceptor for the enzyme in this species is believed to be ubiquinone. Couples the redox reaction to proton translocation (for every two electrons transferred, four hydrogen ions are translocated across the cytoplasmic membrane), and thus conserves the redox energy in a proton gradient. This Hyphomonas neptunium (strain ATCC 15444) protein is NADH-quinone oxidoreductase subunit I.